Here is a 376-residue protein sequence, read N- to C-terminus: 5-amino-6-(D-ribitylamino)uracil--L-tyrosine 4-hydroxyphenyl transferase 1 (376 aa).

A Radical SAM core domain is found at 50–284 (VTYVVNRNIN…AISRILLHGH (235 aa)). [4Fe-4S] cluster is bound by residues Cys64, Cys68, and Cys71.

This sequence belongs to the radical SAM superfamily. CofH family. As to quaternary structure, consists of two subunits, CofG and CofH. [4Fe-4S] cluster is required as a cofactor.

It carries out the reaction 5-amino-6-(D-ribitylamino)uracil + L-tyrosine + S-adenosyl-L-methionine = 5-amino-5-(4-hydroxybenzyl)-6-(D-ribitylimino)-5,6-dihydrouracil + 2-iminoacetate + 5'-deoxyadenosine + L-methionine + H(+). The protein operates within cofactor biosynthesis; coenzyme F0 biosynthesis. Functionally, catalyzes the radical-mediated synthesis of 5-amino-5-(4-hydroxybenzyl)-6-(D-ribitylimino)-5,6-dihydrouracil from 5-amino-6-(D-ribitylamino)uracil and L-tyrosine. This chain is 5-amino-6-(D-ribitylamino)uracil--L-tyrosine 4-hydroxyphenyl transferase 1, found in Methanosarcina barkeri (strain Fusaro / DSM 804).